A 68-amino-acid chain; its full sequence is Alpha-conotoxin Lp1.4 (68 aa).

The signal sequence occupies residues 1–21 (MGMRMMSIMFMLVVLATTVVS). Positions 22–48 (FTSDRALDAMNAAASKKASRLIALAVR) are excised as a propeptide. Intrachain disulfides connect cysteine 50/cysteine 56 and cysteine 51/cysteine 64. A ser-Xaa-Pro motif, crucial for potent interaction with nAChR region spans residues 52 to 54 (SHP). Aspartate 65 carries the post-translational modification Aspartic acid 1-amide.

The protein belongs to the conotoxin A superfamily. In terms of tissue distribution, expressed by the venom duct.

Its subcellular location is the secreted. Functionally, alpha-conotoxins act on postsynaptic membranes, they bind to the nicotinic acetylcholine receptors (nAChR) and thus inhibit them. This toxin inhibits mouse muscle alpha-1-beta-1-gamma-delta (CHRNA1-CHRNB1-CHRNG-CHRND), and weakly rat neuronal alpha-6/alpha-3-beta-2 (CHRNA6/CHRNA3-CHRNB2). The chain is Alpha-conotoxin Lp1.4 from Conus leopardus (Leopard cone).